The chain runs to 458 residues: Light-independent protochlorophyllide reductase subunit N (458 aa).

3 residues coordinate [4Fe-4S] cluster: cysteine 22, cysteine 47, and cysteine 107.

Belongs to the BchN/ChlN family. In terms of assembly, protochlorophyllide reductase is composed of three subunits; ChlL, ChlN and ChlB. Forms a heterotetramer of two ChlB and two ChlN subunits. [4Fe-4S] cluster serves as cofactor.

It localises to the plastid. It is found in the chloroplast. The enzyme catalyses chlorophyllide a + oxidized 2[4Fe-4S]-[ferredoxin] + 2 ADP + 2 phosphate = protochlorophyllide a + reduced 2[4Fe-4S]-[ferredoxin] + 2 ATP + 2 H2O. It functions in the pathway porphyrin-containing compound metabolism; chlorophyll biosynthesis (light-independent). Functionally, component of the dark-operative protochlorophyllide reductase (DPOR) that uses Mg-ATP and reduced ferredoxin to reduce ring D of protochlorophyllide (Pchlide) to form chlorophyllide a (Chlide). This reaction is light-independent. The NB-protein (ChlN-ChlB) is the catalytic component of the complex. This Chaetosphaeridium globosum (Charophycean green alga) protein is Light-independent protochlorophyllide reductase subunit N.